A 204-amino-acid chain; its full sequence is Large ribosomal subunit protein bL25 (204 aa).

A disordered region spans residues 1–23; it reads MSETLHLSAETRDRAGKGASRAL.

This sequence belongs to the bacterial ribosomal protein bL25 family. CTC subfamily. In terms of assembly, part of the 50S ribosomal subunit; part of the 5S rRNA/L5/L18/L25 subcomplex. Contacts the 5S rRNA. Binds to the 5S rRNA independently of L5 and L18.

Functionally, this is one of the proteins that binds to the 5S RNA in the ribosome where it forms part of the central protuberance. In Novosphingobium aromaticivorans (strain ATCC 700278 / DSM 12444 / CCUG 56034 / CIP 105152 / NBRC 16084 / F199), this protein is Large ribosomal subunit protein bL25.